The primary structure comprises 347 residues: D-alanine--D-alanine ligase (347 aa).

The ATP-grasp domain occupies 134 to 332 (KLYAKDLGVK…LAQSLPKTPK (199 aa)). 161–216 (LIKFNFPFIVKPSNAGSSLGVNVVKEEKELVYALDSAFEYSKEVLIEPFIQGVKEY) contacts ATP. Mg(2+) is bound by residues Asp288, Glu300, and Asn302.

It belongs to the D-alanine--D-alanine ligase family. The cofactor is Mg(2+). Requires Mn(2+) as cofactor.

The protein localises to the cytoplasm. It carries out the reaction 2 D-alanine + ATP = D-alanyl-D-alanine + ADP + phosphate + H(+). Its pathway is cell wall biogenesis; peptidoglycan biosynthesis. Its function is as follows. Cell wall formation. The protein is D-alanine--D-alanine ligase of Helicobacter pylori (strain P12).